A 158-amino-acid chain; its full sequence is UPF0329 protein ECU06_0050 (158 aa).

This sequence belongs to the UPF0329 family.

This is UPF0329 protein ECU06_0050 from Encephalitozoon cuniculi (strain GB-M1) (Microsporidian parasite).